A 64-amino-acid polypeptide reads, in one-letter code: Large ribosomal subunit protein eL37 (64 aa).

Residues Cys20, Cys23, Cys35, and Cys38 each coordinate Zn(2+). The segment at 20–38 adopts a C4-type zinc-finger fold; the sequence is CRRCGRRSFHVRKKVCAAC.

Belongs to the eukaryotic ribosomal protein eL37 family. Requires Zn(2+) as cofactor.

Binds to the 23S rRNA. The chain is Large ribosomal subunit protein eL37 from Methanococcus maripaludis (strain C5 / ATCC BAA-1333).